The following is a 376-amino-acid chain: uncharacterized protein (376 aa).

Residues 1–280 (MPIPIIAHIA…RTPGFRRVVS (280 aa)) are Lumenal-facing. 6 residues coordinate NADP(+): Ile-66, Asp-115, Arg-178, Lys-233, Val-270, and Thr-272. Catalysis depends on Lys-233, which acts as the Lowers pKa of active site Tyr. Residues 281–301 (FGKVWGLFLYLLLWPFWWLLL) traverse the membrane as a helical segment. Topologically, residues 302–376 (KGTIHGAQSF…KKKKIKKSKK (75 aa)) are cytoplasmic.

The protein belongs to the short-chain dehydrogenases/reductases (SDR) family.

The protein localises to the cytoplasm. It is found in the endoplasmic reticulum membrane. May be involved in lipid metabolism. This is an uncharacterized protein from Schizosaccharomyces pombe (strain 972 / ATCC 24843) (Fission yeast).